A 325-amino-acid chain; its full sequence is GTPase Era (325 aa).

One can recognise an Era-type G domain in the interval 30–198; the sequence is HCGFVAIVGR…KKHVRDHLPK (169 aa). The tract at residues 38–45 is G1; it reads GRPNVGKS. 38 to 45 is a GTP binding site; sequence GRPNVGKS. A G2 region spans residues 64 to 68; the sequence is QTTRH. The segment at 85–88 is G3; it reads DTPG. GTP-binding positions include 85–89 and 147–150; these read DTPGL and NKVD. A G4 region spans residues 147 to 150; the sequence is NKVD. Residues 177 to 179 are G5; the sequence is ISA. One can recognise a KH type-2 domain in the interval 221–307; the sequence is VREKLMRFTG…YLETWVKVKS (87 aa).

The protein belongs to the TRAFAC class TrmE-Era-EngA-EngB-Septin-like GTPase superfamily. Era GTPase family. Monomer.

The protein localises to the cytoplasm. Its subcellular location is the cell inner membrane. An essential GTPase that binds both GDP and GTP, with rapid nucleotide exchange. Plays a role in 16S rRNA processing and 30S ribosomal subunit biogenesis and possibly also in cell cycle regulation and energy metabolism. This chain is GTPase Era, found in Vibrio cholerae serotype O1 (strain ATCC 39315 / El Tor Inaba N16961).